Consider the following 116-residue polypeptide: Putative iron-sulfur cluster insertion protein ErpA (116 aa).

Iron-sulfur cluster is bound by residues Cys-44, Cys-108, and Cys-110.

This sequence belongs to the HesB/IscA family. As to quaternary structure, homodimer. The cofactor is iron-sulfur cluster.

Required for insertion of 4Fe-4S clusters. The chain is Putative iron-sulfur cluster insertion protein ErpA from Herminiimonas arsenicoxydans.